A 122-amino-acid polypeptide reads, in one-letter code: Large ribosomal subunit protein uL14 (122 aa).

The protein belongs to the universal ribosomal protein uL14 family. In terms of assembly, part of the 50S ribosomal subunit. Forms a cluster with proteins L3 and L19. In the 70S ribosome, L14 and L19 interact and together make contacts with the 16S rRNA in bridges B5 and B8.

Functionally, binds to 23S rRNA. Forms part of two intersubunit bridges in the 70S ribosome. This is Large ribosomal subunit protein uL14 from Ruthia magnifica subsp. Calyptogena magnifica.